The sequence spans 156 residues: CKLF-like MARVEL transmembrane domain-containing protein 5 (156 aa).

One can recognise an MARVEL domain in the interval 29-146 (FLSSLKGILL…DAFKIYRTEL (118 aa)). 4 consecutive transmembrane segments (helical) span residues 35–55 (GILLETELALTFIIFICFTAS), 56–76 (ISAYMAAALLEFLITLAFLFL), 93–113 (LDFLRCLSAIVIFLVVSFAAV), and 119–139 (AAIAAFVFGIILVSVFAYDAF).

This sequence belongs to the chemokine-like factor family.

The protein localises to the membrane. The polypeptide is CKLF-like MARVEL transmembrane domain-containing protein 5 (Cmtm5) (Mus musculus (Mouse)).